The sequence spans 297 residues: 6-dehydroglucose reductase (297 aa).

NADP(+)-binding residues include tryptophan 20, arginine 21, and aspartate 49. Tyrosine 54 serves as the catalytic Proton donor. D-glucose-binding residues include tyrosine 54, lysine 98, histidine 129, and arginine 130. Serine 159, asparagine 160, glutamine 181, serine 211, leucine 213, glycine 215, glycine 261, threonine 262, asparagine 263, and arginine 267 together coordinate NADP(+).

This sequence belongs to the aldo/keto reductase family. In terms of assembly, homotrimer.

It catalyses the reaction D-glucose + NADP(+) = 6-dehydro-D-glucose + NADPH + H(+). Functionally, part of the sulfoquinovose monooxygenase (sulfo-SMO) pathway, a D-sulfoquinovose degradation pathway that enables the complete utilization of all carbons within sulfoquinovose (SQ) with concomitant production of inorganic sulfite. Catalyzes the NADP-dependent reduction of 6-dehydro-D-glucose to D-glucose. Cannot use NADH. The polypeptide is 6-dehydroglucose reductase (Agrobacterium fabrum (strain C58 / ATCC 33970) (Agrobacterium tumefaciens (strain C58))).